The chain runs to 477 residues: Glycogen synthase 1 (477 aa).

K15 contacts ADP-alpha-D-glucose.

It belongs to the glycosyltransferase 1 family. Bacterial/plant glycogen synthase subfamily.

It catalyses the reaction [(1-&gt;4)-alpha-D-glucosyl](n) + ADP-alpha-D-glucose = [(1-&gt;4)-alpha-D-glucosyl](n+1) + ADP + H(+). Its pathway is glycan biosynthesis; glycogen biosynthesis. Its function is as follows. Synthesizes alpha-1,4-glucan chains using ADP-glucose. The sequence is that of Glycogen synthase 1 (glgA1) from Synechocystis sp. (strain ATCC 27184 / PCC 6803 / Kazusa).